A 441-amino-acid chain; its full sequence is Damage-control phosphatase ARMT1 (441 aa).

At A2 the chain carries N-acetylalanine. K40 is subject to N6-acetyllysine. S102 carries the phosphoserine modification. D253 and N254 together coordinate Mn(2+). 253 to 254 provides a ligand contact to substrate; it reads DN. Residues E258 and D291 each contribute to the S-adenosyl-L-methionine site. D291 contacts Mn(2+). Substrate-binding positions include 367 to 371 and K404; that span reads DLNYR. The short motif at 401–404 is the Subfamily III RTxK motif element; the sequence is RTLK.

This sequence belongs to the damage-control phosphatase family. Sugar phosphate phosphatase III subfamily. Requires Mn(2+) as cofactor. Ni(2+) serves as cofactor. Automethylated.

The enzyme catalyses beta-D-fructose 1-phosphate + H2O = D-fructose + phosphate. It carries out the reaction beta-D-fructose 6-phosphate = dihydroxyacetone + D-glyceraldehyde 3-phosphate. The catalysed reaction is L-glutamyl-[protein] + S-adenosyl-L-methionine = [protein]-L-glutamate 5-O-methyl ester + S-adenosyl-L-homocysteine. Metal-dependent phosphatase that shows phosphatase activity against several substrates, including fructose-1-phosphate and fructose-6-phosphate. Its preference for fructose-1-phosphate, a strong glycating agent that causes DNA damage rather than a canonical yeast metabolite, suggests a damage-control function in hexose phosphate metabolism. Has also been shown to have O-methyltransferase activity that methylates glutamate residues of target proteins to form gamma-glutamyl methyl ester residues. Possibly methylates PCNA, suggesting it is involved in the DNA damage response. The sequence is that of Damage-control phosphatase ARMT1 from Homo sapiens (Human).